The following is a 426-amino-acid chain: Serine--tRNA ligase (426 aa).

233 to 235 (TAE) is an L-serine binding site. 264–266 (RSE) contacts ATP. Glutamate 287 serves as a coordination point for L-serine. 351–354 (EISS) is an ATP binding site. L-serine is bound at residue serine 387.

The protein belongs to the class-II aminoacyl-tRNA synthetase family. Type-1 seryl-tRNA synthetase subfamily. Homodimer. The tRNA molecule binds across the dimer.

It localises to the cytoplasm. It catalyses the reaction tRNA(Ser) + L-serine + ATP = L-seryl-tRNA(Ser) + AMP + diphosphate + H(+). The catalysed reaction is tRNA(Sec) + L-serine + ATP = L-seryl-tRNA(Sec) + AMP + diphosphate + H(+). The protein operates within aminoacyl-tRNA biosynthesis; selenocysteinyl-tRNA(Sec) biosynthesis; L-seryl-tRNA(Sec) from L-serine and tRNA(Sec): step 1/1. Its function is as follows. Catalyzes the attachment of serine to tRNA(Ser). Is also able to aminoacylate tRNA(Sec) with serine, to form the misacylated tRNA L-seryl-tRNA(Sec), which will be further converted into selenocysteinyl-tRNA(Sec). This Pseudomonas putida (strain W619) protein is Serine--tRNA ligase.